We begin with the raw amino-acid sequence, 367 residues long: Probable butyrate kinase (367 aa).

It belongs to the acetokinase family.

It is found in the cytoplasm. It catalyses the reaction butanoate + ATP = butanoyl phosphate + ADP. The polypeptide is Probable butyrate kinase (Bacillus cereus (strain ZK / E33L)).